We begin with the raw amino-acid sequence, 508 residues long: Photosystem II CP47 reaction center protein (508 aa).

6 consecutive transmembrane segments (helical) span residues 21–36 (SVHI…WAGS), 101–115 (IVFS…IWHW), 140–156 (GIHL…SGAF), 203–218 (IAAG…FHLS), 237–252 (VLSS…AFIV), and 457–472 (TFAL…HGAR).

It belongs to the PsbB/PsbC family. PsbB subfamily. In terms of assembly, PSII is composed of 1 copy each of membrane proteins PsbA, PsbB, PsbC, PsbD, PsbE, PsbF, PsbH, PsbI, PsbJ, PsbK, PsbL, PsbM, PsbT, PsbX, PsbY, PsbZ, Psb30/Ycf12, at least 3 peripheral proteins of the oxygen-evolving complex and a large number of cofactors. It forms dimeric complexes. Requires Binds multiple chlorophylls. PSII binds additional chlorophylls, carotenoids and specific lipids. as cofactor.

Its subcellular location is the plastid. It is found in the chloroplast thylakoid membrane. One of the components of the core complex of photosystem II (PSII). It binds chlorophyll and helps catalyze the primary light-induced photochemical processes of PSII. PSII is a light-driven water:plastoquinone oxidoreductase, using light energy to abstract electrons from H(2)O, generating O(2) and a proton gradient subsequently used for ATP formation. The chain is Photosystem II CP47 reaction center protein from Cycas taitungensis (Prince sago).